The primary structure comprises 246 residues: Sugar fermentation stimulation protein homolog (246 aa).

The protein belongs to the SfsA family.

The chain is Sugar fermentation stimulation protein homolog from Prochlorococcus marinus (strain MIT 9301).